Consider the following 126-residue polypeptide: Large ribosomal subunit protein bL19 (126 aa).

This sequence belongs to the bacterial ribosomal protein bL19 family.

This protein is located at the 30S-50S ribosomal subunit interface and may play a role in the structure and function of the aminoacyl-tRNA binding site. The polypeptide is Large ribosomal subunit protein bL19 (Dechloromonas aromatica (strain RCB)).